Here is a 787-residue protein sequence, read N- to C-terminus: Bifunctional dethiobiotin synthetase/adenosylmethionine-8-amino-7-oxononanoate aminotransferase (787 aa).

ATP is bound at residue 23–28 (DVGKTI). Residue threonine 27 participates in Mg(2+) binding. Threonine 54 contributes to the substrate binding site. Positions 61 and 123 each coordinate Mg(2+). ATP is bound by residues 123–126 (ETAG) and 184–185 (KD). 323–324 (WW) contributes to the (8S)-8-amino-7-oxononanoate binding site. Residue 384–385 (GS) coordinates pyridoxal 5'-phosphate. (8S)-8-amino-7-oxononanoate is bound at residue tyrosine 421. Aspartate 582 contacts pyridoxal 5'-phosphate. Residues lysine 611 and glycine 645 each coordinate (8S)-8-amino-7-oxononanoate. 646–647 (HS) provides a ligand contact to pyridoxal 5'-phosphate. (8S)-8-amino-7-oxononanoate is bound at residue arginine 756.

It in the N-terminal section; belongs to the dethiobiotin synthetase family. This sequence in the C-terminal section; belongs to the class-III pyridoxal-phosphate-dependent aminotransferase family. BioA subfamily. As to quaternary structure, homodimer. It depends on Mg(2+) as a cofactor. Requires pyridoxal 5'-phosphate as cofactor.

Its subcellular location is the mitochondrion matrix. The enzyme catalyses (7R,8S)-7,8-diammoniononanoate + CO2 + ATP = (4R,5S)-dethiobiotin + ADP + phosphate + 3 H(+). It catalyses the reaction (8S)-8-amino-7-oxononanoate + S-adenosyl-L-methionine = S-adenosyl-4-methylsulfanyl-2-oxobutanoate + (7R,8S)-7,8-diammoniononanoate. It participates in cofactor biosynthesis; biotin biosynthesis; biotin from 7,8-diaminononanoate: step 1/2. The protein operates within cofactor biosynthesis; biotin biosynthesis; 7,8-diaminononanoate from 8-amino-7-oxononanoate (SAM route): step 1/1. Its function is as follows. Bifunctional enzyme; part of the cluster involved in the biosynthesis of biotin (also known as vitamin B8 or vitamin H), a water-soluble vitamin that functions as a prosthetic group of many carboxylases, such as acetyl-CoA carboxylase and pyruvate carboxylase. Catalyzes a mechanistically unusual reaction, the ATP-dependent insertion of CO2 between the N7 and N8 nitrogen atoms of 7,8-diaminopelargonic acid (DAPA) to form an ureido ring. Also catalyzes the transfer of the alpha-amino group from S-adenosyl-L-methionine (SAM) to 7-keto-8-aminopelargonic acid (KAPA) to form 7,8-diaminopelargonic acid (DAPA). It is the only animotransferase known to utilize SAM as an amino donor. The polypeptide is Bifunctional dethiobiotin synthetase/adenosylmethionine-8-amino-7-oxononanoate aminotransferase (Emericella nidulans (strain FGSC A4 / ATCC 38163 / CBS 112.46 / NRRL 194 / M139) (Aspergillus nidulans)).